The sequence spans 76 residues: DNA-directed RNA polymerase subunit omega (76 aa).

Belongs to the RNA polymerase subunit omega family. As to quaternary structure, in cyanobacteria the RNAP catalytic core is composed of 2 alpha, 1 beta, 1 beta', 1 gamma and 1 omega subunit. When a sigma factor is associated with the core the holoenzyme is formed, which can initiate transcription.

The enzyme catalyses RNA(n) + a ribonucleoside 5'-triphosphate = RNA(n+1) + diphosphate. Promotes RNA polymerase assembly. Latches the N- and C-terminal regions of the beta' subunit thereby facilitating its interaction with the beta and alpha subunits. This is DNA-directed RNA polymerase subunit omega (rpoZ) from Synechocystis sp. (strain ATCC 27184 / PCC 6803 / Kazusa).